The chain runs to 458 residues: Glycine--tRNA ligase (458 aa).

Residues Arg97 and Glu171 each contribute to the substrate site. ATP is bound by residues 203–205 (RNE), 213–218 (FRTREF), 287–288 (EL), and 331–334 (GADR). 218–222 (FEQME) contributes to the substrate binding site. 327–331 (EPSLG) contributes to the substrate binding site.

This sequence belongs to the class-II aminoacyl-tRNA synthetase family. Homodimer.

The protein localises to the cytoplasm. It catalyses the reaction tRNA(Gly) + glycine + ATP = glycyl-tRNA(Gly) + AMP + diphosphate. Catalyzes the attachment of glycine to tRNA(Gly). The polypeptide is Glycine--tRNA ligase (Bacillus thuringiensis subsp. konkukian (strain 97-27)).